The following is a 314-amino-acid chain: tRNA dimethylallyltransferase (314 aa).

Residue 12–19 (GPTASGKT) coordinates ATP. 14–19 (TASGKT) is a binding site for substrate. Interaction with substrate tRNA regions lie at residues 37–40 (DSAL), 161–165 (QRINR), 242–247 (RCVGYR), and 275–282 (KRQITWLR).

This sequence belongs to the IPP transferase family. As to quaternary structure, monomer. It depends on Mg(2+) as a cofactor.

It carries out the reaction adenosine(37) in tRNA + dimethylallyl diphosphate = N(6)-dimethylallyladenosine(37) in tRNA + diphosphate. Catalyzes the transfer of a dimethylallyl group onto the adenine at position 37 in tRNAs that read codons beginning with uridine, leading to the formation of N6-(dimethylallyl)adenosine (i(6)A). The chain is tRNA dimethylallyltransferase from Mannheimia succiniciproducens (strain KCTC 0769BP / MBEL55E).